Reading from the N-terminus, the 359-residue chain is MAYNKKRFTSSRKLDHLRICAEEEVESGDAGFGDVRLVHHALPECDMRSIDLSTRFLGHTLSSPLFVSAMTGGHPGTKDANARLARIAERFGLGMGVGSQRAALENPALADTFSVVRDEAPHAFLVANLGAVQLREHGAAWAGQAIEMIGANAIAIHLNFLQEAIQPEGDLSATGCIAAIADLCAETKIPVIVKETGCGISREVARLCWSAGAAAIDIGGWGGTSWAAVESFRADRKDAQGRALKTLGEDFAGWGIPTVVSLAEVAGTGSPVIASGGIRSGIDMAKCLALGADLCGMALPLLKPALESDEALAARVETIHRELVASMFLCGAARIRDMRRARLFITGRTRQMMDDGNPA.

12 to 13 (RK) serves as a coordination point for substrate. FMN-binding positions include Ser-68, 69-71 (AMT), Ser-99, and Asn-128. Substrate is bound at residue 99-101 (SQR). Gln-162 is a substrate binding site. Glu-163 provides a ligand contact to Mg(2+). FMN-binding positions include Lys-194, Thr-224, 277 to 279 (GIR), and 298 to 299 (AL).

The protein belongs to the IPP isomerase type 2 family. In terms of assembly, homooctamer. Dimer of tetramers. FMN is required as a cofactor. The cofactor is NADPH. It depends on Mg(2+) as a cofactor.

It is found in the cytoplasm. The enzyme catalyses isopentenyl diphosphate = dimethylallyl diphosphate. Functionally, involved in the biosynthesis of isoprenoids. Catalyzes the 1,3-allylic rearrangement of the homoallylic substrate isopentenyl (IPP) to its allylic isomer, dimethylallyl diphosphate (DMAPP). This is Isopentenyl-diphosphate delta-isomerase from Methanoregula boonei (strain DSM 21154 / JCM 14090 / 6A8).